Reading from the N-terminus, the 257-residue chain is Imidazole glycerol phosphate synthase subunit HisF (257 aa).

Active-site residues include D12 and D131.

This sequence belongs to the HisA/HisF family. As to quaternary structure, heterodimer of HisH and HisF.

Its subcellular location is the cytoplasm. It catalyses the reaction 5-[(5-phospho-1-deoxy-D-ribulos-1-ylimino)methylamino]-1-(5-phospho-beta-D-ribosyl)imidazole-4-carboxamide + L-glutamine = D-erythro-1-(imidazol-4-yl)glycerol 3-phosphate + 5-amino-1-(5-phospho-beta-D-ribosyl)imidazole-4-carboxamide + L-glutamate + H(+). It participates in amino-acid biosynthesis; L-histidine biosynthesis; L-histidine from 5-phospho-alpha-D-ribose 1-diphosphate: step 5/9. Functionally, IGPS catalyzes the conversion of PRFAR and glutamine to IGP, AICAR and glutamate. The HisF subunit catalyzes the cyclization activity that produces IGP and AICAR from PRFAR using the ammonia provided by the HisH subunit. The sequence is that of Imidazole glycerol phosphate synthase subunit HisF from Paraburkholderia phytofirmans (strain DSM 17436 / LMG 22146 / PsJN) (Burkholderia phytofirmans).